The chain runs to 123 residues: Large ribosomal subunit protein uL18 (123 aa).

Belongs to the universal ribosomal protein uL18 family. In terms of assembly, part of the 50S ribosomal subunit; part of the 5S rRNA/L5/L18/L25 subcomplex. Contacts the 5S and 23S rRNAs.

In terms of biological role, this is one of the proteins that bind and probably mediate the attachment of the 5S RNA into the large ribosomal subunit, where it forms part of the central protuberance. The protein is Large ribosomal subunit protein uL18 of Chlamydia caviae (strain ATCC VR-813 / DSM 19441 / 03DC25 / GPIC) (Chlamydophila caviae).